A 1976-amino-acid polypeptide reads, in one-letter code: Myosin-10 (1976 aa).

Arg-18 is subject to Omega-N-methylarginine. A Myosin N-terminal SH3-like domain is found at 31–81 (TAKKLVWIPSERHGFEAASIKEERGDEVMVELAENGKKAMVNKDDIQKMNP). Positions 85–783 (SKVEDMAELT…VLAHLEEERD (699 aa)) constitute a Myosin motor domain. ATP is bound at residue 178–185 (GESGAGKT). N6-acetyllysine is present on Lys-442. The interval 661–683 (LTKLMATLRNTNPNFVRCIIPNH) is actin-binding. The IQ domain maps to 786–815 (ITDIIIFFQAVCRGYLARKAFAKKQQQLSA). Residues 845-1976 (LQVTRQEEEL…VNETQPPQSE (1132 aa)) adopt a coiled-coil conformation. A disordered region spans residues 1125 to 1175 (EDFESEKASRNKAEKQKRDLSEELEALKTELEDTLDTTAAQQELRTKREQE). A compositionally biased stretch (basic and acidic residues) spans 1129–1155 (SEKASRNKAEKQKRDLSEELEALKTEL). Ser-1145 carries the post-translational modification Phosphoserine. Lys-1241, Lys-1301, and Lys-1645 each carry N6-acetyllysine. 2 disordered regions span residues 1697–1718 (ASSE…DEIA) and 1874–1976 (KANA…PQSE). The segment covering 1698-1708 (SSERARRHAEQ) has biased composition (basic and acidic residues). At Arg-1930 the chain carries Omega-N-methylarginine. A phosphoserine mark is found at Ser-1935, Ser-1937, Ser-1938, and Ser-1939. Position 1940 is an omega-N-methylarginine (Arg-1940). A phosphoserine mark is found at Ser-1952 and Ser-1956. Thr-1960 is modified (phosphothreonine). Residues 1967–1976 (VNETQPPQSE) show a composition bias toward polar residues. Ser-1975 carries the phosphoserine modification.

The protein belongs to the TRAFAC class myosin-kinesin ATPase superfamily. Myosin family. Myosin is a hexameric protein that consists of 2 heavy chain subunits (MHC), 2 alkali light chain subunits (MLC) and 2 regulatory light chain subunits (MLC-2). Interacts with PLEKHG6. Interacts with ECPAS. Interacts with KIF26B. Interacts with LARP6. Interacts with MCC. Interacts with CFAP95. In terms of processing, phosphorylated by ABL2.

The protein localises to the cell projection. The protein resides in the lamellipodium. Functionally, involved with LARP6 in the stabilization of type I collagen mRNAs for CO1A1 and CO1A2. During cell spreading, plays an important role in cytoskeleton reorganization, focal contacts formation (in the central part but not the margins of spreading cells), and lamellipodial extension; this function is mechanically antagonized by MYH9. Cellular myosin that appears to play a role in cytokinesis, cell shape, and specialized functions such as secretion and capping. The protein is Myosin-10 (Myh10) of Rattus norvegicus (Rat).